The sequence spans 91 residues: Large ribosomal subunit protein bL31 (91 aa).

The disordered stretch occupies residues 62–91 (RRKYSGTKPQQTAKGKKAAPKSTPKTNKKG).

This sequence belongs to the bacterial ribosomal protein bL31 family. Type A subfamily. As to quaternary structure, part of the 50S ribosomal subunit.

Its function is as follows. Binds the 23S rRNA. In Thermosynechococcus vestitus (strain NIES-2133 / IAM M-273 / BP-1), this protein is Large ribosomal subunit protein bL31.